Consider the following 424-residue polypeptide: Ornithine aminotransferase (424 aa).

An N6-(pyridoxal phosphate)lysine modification is found at Lys-272. A Glycyl lysine isopeptide (Lys-Gly) (interchain with G-Cter in ubiquitin) cross-link involves residue Lys-390.

The protein belongs to the class-III pyridoxal-phosphate-dependent aminotransferase family. Pyridoxal 5'-phosphate serves as cofactor.

It localises to the cytoplasm. The enzyme catalyses a 2-oxocarboxylate + L-ornithine = L-glutamate 5-semialdehyde + an L-alpha-amino acid. It functions in the pathway amino-acid biosynthesis; L-proline biosynthesis; L-glutamate 5-semialdehyde from L-ornithine: step 1/1. With respect to regulation, by arginine and urea. Functionally, catalyzes the transamination of ornithine into L-glutamate gamma-semialdehyde, the second step of arginine degradation. The chain is Ornithine aminotransferase (CAR2) from Saccharomyces cerevisiae (strain ATCC 204508 / S288c) (Baker's yeast).